The following is a 483-amino-acid chain: Aspartyl/glutamyl-tRNA(Asn/Gln) amidotransferase subunit B (483 aa).

This sequence belongs to the GatB/GatE family. GatB subfamily. Heterotrimer of A, B and C subunits.

The enzyme catalyses L-glutamyl-tRNA(Gln) + L-glutamine + ATP + H2O = L-glutaminyl-tRNA(Gln) + L-glutamate + ADP + phosphate + H(+). It catalyses the reaction L-aspartyl-tRNA(Asn) + L-glutamine + ATP + H2O = L-asparaginyl-tRNA(Asn) + L-glutamate + ADP + phosphate + 2 H(+). Functionally, allows the formation of correctly charged Asn-tRNA(Asn) or Gln-tRNA(Gln) through the transamidation of misacylated Asp-tRNA(Asn) or Glu-tRNA(Gln) in organisms which lack either or both of asparaginyl-tRNA or glutaminyl-tRNA synthetases. The reaction takes place in the presence of glutamine and ATP through an activated phospho-Asp-tRNA(Asn) or phospho-Glu-tRNA(Gln). This Rickettsia conorii (strain ATCC VR-613 / Malish 7) protein is Aspartyl/glutamyl-tRNA(Asn/Gln) amidotransferase subunit B.